A 497-amino-acid chain; its full sequence is COP9 signalosome complex subunit 6 (497 aa).

The MPN domain maps to 21–162 (VALHPLPILE…LTIYESNLEI (142 aa)). Disordered stretches follow at residues 230-282 (ATED…KNRD), 324-350 (YLSSGDASSQQQQQQQQQQQTEGLDQP), and 435-497 (AKNS…RFDH). Residues 236 to 246 (SDKPLMKKVVD) show a composition bias toward basic and acidic residues. Low complexity-rich tracts occupy residues 258–272 (SDDAAAEAPTTSSAA) and 333–343 (QQQQQQQQQQQ). Residues 440 to 453 (RREQASHGGGERFN) are compositionally biased toward basic and acidic residues. The segment covering 475-488 (VGEGSASGSGGSGP) has biased composition (gly residues).

Belongs to the peptidase M67A family. CSN6 subfamily. In terms of assembly, component of the COP9 signalosome (CSN) complex.

It localises to the cytoplasm. The protein resides in the nucleus. Functionally, component of the COP9 signalosome (CSN) complex that acts as an regulator of the ubiquitin (Ubl) conjugation pathway by mediating the deneddylation of the cullin subunit of SCF-type E3 ubiquitin-protein ligase complexes. The CSN complex is involved in the regulation of the circadian clock through its control of the stability of the SCF(FWD1) complex. This Neurospora crassa (strain ATCC 24698 / 74-OR23-1A / CBS 708.71 / DSM 1257 / FGSC 987) protein is COP9 signalosome complex subunit 6 (csn-6).